The chain runs to 35 residues: Cupiennin-1d (35 aa).

Residue glutamate 35 is modified to Glutamic acid 1-amide.

Belongs to the cationic peptide 04 (cupiennin) family. 01 subfamily. Expressed by the venom gland.

The protein resides in the secreted. In terms of biological role, has antimicrobial activity against B.subtilis, E.coli, E.faecalis, P.aeruginosa, and S.aureus. Has insecticidal and hemolytic activities. Probably acts by disturbing membrane function with its amphipathic structure. This is Cupiennin-1d from Cupiennius salei (American wandering spider).